We begin with the raw amino-acid sequence, 568 residues long: Protein NDNF (568 aa).

A signal peptide spans Met-1 to Thr-19. Fibronectin type-III domains are found at residues Asn-261–Phe-331 and Pro-445–Thr-564. N-linked (GlcNAc...) asparagine glycosylation is found at Asn-322 and Asn-488.

Binds heparin and chondroitin sulfate. O-glycosylated; contains heparan sulfate and chondroitin sulfate. Post-translationally, N-glycosylated. In terms of tissue distribution, expressed in brain and spinal cord with no expression detected in heart, kidney or liver. Expressed by neurons but not by astrocytes. In the brain, detected in the cerebrum, cerebellum and olfactory bulbs. In the cerebral cortex, highly expressed in Cajal-Retzius cells. Also expressed in hippocampal neurons and in Purkinje and granule cells of the cerebellum (at protein level). Expressed in neurons along the GnRH migratory route.

The protein resides in the secreted. Functionally, secretory protein that plays a role in various cellular processes. Acts as a chemorepellent acting on gonadotropin-releasing hormone (GnRH) expressing neurons regulating their migration to the hypothalamus. Also promotes neuron migration, growth and survival as well as neurite outgrowth and is involved in the development of the olfactory system. May also act through the regulation of growth factors activity and downstream signaling. Also regulates extracellular matrix assembly and cell adhesiveness. Promotes endothelial cell survival, vessel formation and plays an important role in the process of revascularization through NOS3-dependent mechanisms. The polypeptide is Protein NDNF (Ndnf) (Mus musculus (Mouse)).